A 630-amino-acid chain; its full sequence is Transferrin-binding protein B (630 aa).

The first 17 residues, 1–17, serve as a signal peptide directing secretion; that stretch reads MKSVPLITGGLSFLLSA. Cys18 carries N-palmitoyl cysteine lipidation. Cys18 carries the S-diacylglycerol cysteine lipid modification. 3 disordered regions span residues 26-53, 280-301, and 591-613; these read DVDDVSNPSSSKPRYQDDTSSSRTKSNL, VTPTKSTSDEHPFTSEGTLEGG, and NNPTATNSESSSTVPSPPNSPNA. Residues 32-50 show a composition bias toward polar residues; that stretch reads NPSSSKPRYQDDTSSSRTK.

The protein belongs to the TbpB family.

The protein localises to the cell outer membrane. It is found in the cell surface. Functionally, haemophilus acquires iron by extracting it from serum transferrin (TF) in its human host. Acts as a transferrin receptor and is required for transferrin utilization. This is Transferrin-binding protein B from Haemophilus influenzae (strain 86-028NP).